A 993-amino-acid chain; its full sequence is P3N-PIPO polyprotein (993 aa).

In terms of domain architecture, Peptidase S30 spans 154 to 298; the sequence is GVTPYSVQQL…ESTMLSTHHY (145 aa). Residues histidine 207, aspartate 216, and serine 249 each act as for P1 proteinase activity in the active site. Positions 349–352 match the Involved in interaction with stylet and aphid transmission motif; that stretch reads KITC. The Involved in virions binding and aphid transmission motif lies at 607-609; sequence PTK. A Peptidase C6 domain is found at 633-755; it reads MYIAKSGYCY…DSEMKHYRVG (123 aa). Catalysis depends on for helper component proteinase activity residues cysteine 641 and histidine 714.

It belongs to the potyviridae P3N-PIPO polyprotein family. Interacts (via PIPO domain) with host PCaP1 protein; this interaction may help to anchor the movement complex to the plasma membrane from which the complex could move to the plasmodesmata. Potyviral RNA is expressed as two polyproteins which undergo post-translational proteolytic processing. Genome polyprotein is processed by NIa-pro, P1 and HC-pro proteinases resulting in the production of at least ten individual proteins. P3N-PIPO is cleaved by P1 and HC-pro proteinases resulting in the production of three individual proteins. The P1 proteinase and the HC-pro cleave only their respective C-termini autocatalytically.

It is found in the host cell junction. It localises to the host plasmodesma. It carries out the reaction Hydrolyzes a Gly-|-Gly bond at its own C-terminus, commonly in the sequence -Tyr-Xaa-Val-Gly-|-Gly, in the processing of the potyviral polyprotein.. Its function is as follows. Required for aphid transmission and also has proteolytic activity. Only cleaves a Gly-Gly dipeptide at its own C-terminus. Interacts with virions and aphid stylets. Acts as a suppressor of RNA-mediated gene silencing, also known as post-transcriptional gene silencing (PTGS), a mechanism of plant viral defense that limits the accumulation of viral RNAs. May have RNA-binding activity. Allows efficient cell to cell propagation, by bypassing the host cell wall barrier. Transports viral genome to neighboring plant cells directly through plasmosdesmata, without any budding. The protein is P3N-PIPO polyprotein of Solanum betaceum (Tamarillo).